The following is a 365-amino-acid chain: MTNISAEKRILIMAGGTGGHVFPALAVAKYLSQKSWKVRWLGTAERMEARLVPQHGFDIDFIDIKGVRGNGLLRKLAAPFKVMRSVMQARRVIQEFKPDVVLGMGGFASGPGGIAARLSGIPLVLHEQNAIPGMTNKLLSRIASKVLCAFEDTFDNIPAQVVGNPIRKELIALGQSTETDCVEDALKVLVVGGSLGAKVFNDLMPGVTDAVSKTHSITVWHQVGKGNLASVKGDYQHLGQDGSVIVAEFIDDMEAAYSWADVVLCRAGALTVSELAAVGLPSILVPYPHAVDDHQTKNAQVLVNAGGAFLLPQTILDADKLISKLQILASDRAELCHMGERAKDVAIIDATEKVADVCIELAQKD.

Residues 17–19 (TGG), Asn-129, Arg-167, Ser-194, Ile-250, 269–274 (ALTVSE), and Gln-295 contribute to the UDP-N-acetyl-alpha-D-glucosamine site.

Belongs to the glycosyltransferase 28 family. MurG subfamily.

It is found in the cell inner membrane. It carries out the reaction di-trans,octa-cis-undecaprenyl diphospho-N-acetyl-alpha-D-muramoyl-L-alanyl-D-glutamyl-meso-2,6-diaminopimeloyl-D-alanyl-D-alanine + UDP-N-acetyl-alpha-D-glucosamine = di-trans,octa-cis-undecaprenyl diphospho-[N-acetyl-alpha-D-glucosaminyl-(1-&gt;4)]-N-acetyl-alpha-D-muramoyl-L-alanyl-D-glutamyl-meso-2,6-diaminopimeloyl-D-alanyl-D-alanine + UDP + H(+). It functions in the pathway cell wall biogenesis; peptidoglycan biosynthesis. Cell wall formation. Catalyzes the transfer of a GlcNAc subunit on undecaprenyl-pyrophosphoryl-MurNAc-pentapeptide (lipid intermediate I) to form undecaprenyl-pyrophosphoryl-MurNAc-(pentapeptide)GlcNAc (lipid intermediate II). The sequence is that of UDP-N-acetylglucosamine--N-acetylmuramyl-(pentapeptide) pyrophosphoryl-undecaprenol N-acetylglucosamine transferase from Shewanella violacea (strain JCM 10179 / CIP 106290 / LMG 19151 / DSS12).